We begin with the raw amino-acid sequence, 334 residues long: L-lactate dehydrogenase B chain (334 aa).

Ala2 is modified (N-acetylalanine). Position 7 is an N6-acetyllysine (Lys7). NAD(+) is bound by residues 30–58 (GQVG…LEDK) and Arg100. Ser44 is modified (phosphoserine). N6-acetyllysine is present on Lys58. Arg107 lines the substrate pocket. The residue at position 119 (Lys119) is an N6-acetyllysine. Residue Asn139 coordinates NAD(+). The substrate site is built by Asn139 and Arg170. The active-site Proton acceptor is the His194. Tyr240 bears the Phosphotyrosine mark. Substrate is bound at residue Thr249. Lys329 is modified (N6-acetyllysine).

This sequence belongs to the LDH/MDH superfamily. LDH family. As to quaternary structure, homotetramer. Interacts with PTEN upstream reading frame protein MP31; the interaction leads to inhibition of mitochondrial lactate dehydrogenase activity, preventing conversion of lactate to pyruvate in mitochondria.

It is found in the cytoplasm. The protein localises to the mitochondrion inner membrane. The enzyme catalyses (S)-lactate + NAD(+) = pyruvate + NADH + H(+). Its pathway is fermentation; pyruvate fermentation to lactate; (S)-lactate from pyruvate: step 1/1. Interconverts simultaneously and stereospecifically pyruvate and lactate with concomitant interconversion of NADH and NAD(+). The protein is L-lactate dehydrogenase B chain (LDHB) of Sus scrofa (Pig).